Reading from the N-terminus, the 108-residue chain is Small ribosomal subunit protein bS18 (108 aa).

The span at Met-1 to Ile-12 shows a compositional bias: polar residues. Positions Met-1–Lys-33 are disordered.

The protein belongs to the bacterial ribosomal protein bS18 family. In terms of assembly, part of the 30S ribosomal subunit. Forms a tight heterodimer with protein bS6.

Binds as a heterodimer with protein bS6 to the central domain of the 16S rRNA, where it helps stabilize the platform of the 30S subunit. In Mycoplasmoides gallisepticum (strain R(low / passage 15 / clone 2)) (Mycoplasma gallisepticum), this protein is Small ribosomal subunit protein bS18.